Reading from the N-terminus, the 423-residue chain is Histidine--tRNA ligase (423 aa).

Belongs to the class-II aminoacyl-tRNA synthetase family. As to quaternary structure, homodimer.

Its subcellular location is the cytoplasm. It catalyses the reaction tRNA(His) + L-histidine + ATP = L-histidyl-tRNA(His) + AMP + diphosphate + H(+). This Desulfosudis oleivorans (strain DSM 6200 / JCM 39069 / Hxd3) (Desulfococcus oleovorans) protein is Histidine--tRNA ligase.